Reading from the N-terminus, the 400-residue chain is NADH-quinone oxidoreductase subunit D (400 aa).

The protein belongs to the complex I 49 kDa subunit family. NDH-1 is composed of 14 different subunits. Subunits NuoB, C, D, E, F, and G constitute the peripheral sector of the complex.

It localises to the cell inner membrane. The enzyme catalyses a quinone + NADH + 5 H(+)(in) = a quinol + NAD(+) + 4 H(+)(out). NDH-1 shuttles electrons from NADH, via FMN and iron-sulfur (Fe-S) centers, to quinones in the respiratory chain. The immediate electron acceptor for the enzyme in this species is believed to be a menaquinone. Couples the redox reaction to proton translocation (for every two electrons transferred, four hydrogen ions are translocated across the cytoplasmic membrane), and thus conserves the redox energy in a proton gradient. The sequence is that of NADH-quinone oxidoreductase subunit D from Chlorobaculum parvum (strain DSM 263 / NCIMB 8327) (Chlorobium vibrioforme subsp. thiosulfatophilum).